The primary structure comprises 89 residues: Putative antitoxin VapB42 (89 aa).

In terms of biological role, possibly the antitoxin component of a type II toxin-antitoxin (TA) system. Its cognate toxin is VapC42 (Potential). In Mycobacterium tuberculosis (strain CDC 1551 / Oshkosh), this protein is Putative antitoxin VapB42 (vapB42).